A 346-amino-acid polypeptide reads, in one-letter code: Free fatty acid receptor 3 (346 aa).

The Extracellular portion of the chain corresponds to 1–19; sequence MDTGPDQSYFSGNHWFVFS. A helical membrane pass occupies residues 20 to 40; the sequence is VYLLTFLVGLPLNLLALVVFV. Over 41–47 the chain is Cytoplasmic; the sequence is GKLQRRP. A helical transmembrane segment spans residues 48 to 68; the sequence is VAVDVLLLNLTASDLLLLLFL. Topologically, residues 69-88 are extracellular; it reads PFRMVEAANGMHWPLPFILC. A disulfide bridge links Cys88 with Cys169. The chain crosses the membrane as a helical span at residues 89-111; it reads PLSGFIFFTTIYLTALFLAAVSI. Topologically, residues 112-132 are cytoplasmic; the sequence is ERFLSVAHPLWYKTRPRLGQA. A helical membrane pass occupies residues 133 to 153; it reads GLVSVACWLLASAHCSVVYVI. The Extracellular portion of the chain corresponds to 154–178; sequence EFSGDISHSQGTNGTCYLEFRKDQL. An N-linked (GlcNAc...) asparagine glycan is attached at Asn166. A helical membrane pass occupies residues 179-199; sequence AILLPVRLEMAVVLFVVPLII. At 200–222 the chain is on the cytoplasmic side; the sequence is TSYCYSRLVWILGRGGSHRRQRR. A helical membrane pass occupies residues 223–243; that stretch reads VAGLLAATLLNFLVCFGPYNV. Topologically, residues 244-258 are extracellular; it reads SHVVGYICGESPAWR. Residues 259-279 traverse the membrane as a helical segment; the sequence is IYVTLLSTLNSCVDPFVYYFS. Residues 280 to 346 are Cytoplasmic-facing; the sequence is SSGFQADFHE…TGGQVACAES (67 aa). Residues 307–330 show a composition bias toward basic and acidic residues; sequence MELKEQKGGEEQRADRPAERKTSE. A disordered region spans residues 307-346; that stretch reads MELKEQKGGEEQRADRPAERKTSEHSQGCGTGGQVACAES.

This sequence belongs to the G-protein coupled receptor 1 family. Highest level in adipose tissue, and lower expression across all tissues tested. Expressed in sympathetic ganglia.

It is found in the cell membrane. Functionally, g protein-coupled receptor that is activated by a major product of dietary fiber digestion, the short chain fatty acids (SCFAs), and that plays a role in the regulation of whole-body energy homeostasis and in intestinal immunity. In omnivorous mammals, the short chain fatty acids acetate, propionate and butyrate are produced primarily by the gut microbiome that metabolizes dietary fibers. SCFAs serve as a source of energy but also act as signaling molecules. That G protein-coupled receptor is probably coupled to the pertussis toxin-sensitive, G(i/o)-alpha family of G proteins. Its activation results in the formation of inositol 1,4,5-trisphosphate, the mobilization of intracellular calcium, the phosphorylation of the MAPK3/ERK1 and MAPK1/ERK2 kinases and the inhibition of intracellular cAMP accumulation. Activated by SCFAs and by beta-hydroxybutyrate, a ketone body produced by the liver upon starvation, it inhibits N-type calcium channels and modulates the activity of sympathetic neurons through a signaling cascade involving the beta and gamma subunits of its coupled G protein, phospholipase C and MAP kinases. Thereby, it may regulate energy expenditure through the control of the sympathetic nervous system that controls for instance heart rate. Upon activation by SCFAs accumulating in the intestine, it may also signal to the brain via neural circuits which in turn would regulate intestinal gluconeogenesis. May also control the production of hormones involved in whole-body energy homeostasis. May for instance, regulate blood pressure through renin secretion. May also regulate secretion of the PYY peptide by enteroendocrine cells and control gut motility, intestinal transit rate, and the harvesting of energy from SCFAs produced by gut microbiota. May also indirectly regulate the production of LEP/Leptin, a hormone acting on the CNS to inhibit food intake, in response to the presence of short-chain fatty acids in the intestine. Finally, may also play a role in glucose homeostasis. Besides its role in energy homeostasis, may play a role in intestinal immunity. May mediate the activation of the inflammatory and immune response by SCFAs in the gut, regulating the rapid production of chemokines and cytokines by intestinal epithelial cells. Among SCFAs, the fatty acids containing less than 6 carbons, the most potent activators are probably propionate, butyrate and pentanoate while acetate is a poor activator. This Homo sapiens (Human) protein is Free fatty acid receptor 3 (FFAR3).